The following is an 832-amino-acid chain: Subtilisin-like protease SBT2.1 (832 aa).

Residues 1-24 (MDESSLVRFVFLLCLVSSSVFCLA) form the signal peptide. Residues 25–138 (ESDQNATVSS…VVLDFLVEKA (114 aa)) constitute a propeptide, activation peptide. N-linked (GlcNAc...) asparagine glycans are attached at residues N29 and N73. The region spanning 36-136 (VYIVTLKDRP…ENVVLDFLVE (101 aa)) is the Inhibitor I9 domain. The Peptidase S8 domain maps to 145-684 (FLGLPRGAWL…SGFVNATAAL (540 aa)). The active-site Charge relay system is D172. N233 is a glycosylation site (N-linked (GlcNAc...) asparagine). H247 functions as the Charge relay system in the catalytic mechanism. N272, N315, N390, N417, N470, N515, and N522 each carry an N-linked (GlcNAc...) asparagine glycan. Positions 408–503 (LVLATHALRN…MDIPGILISS (96 aa)) constitute a PA domain. S609 functions as the Charge relay system in the catalytic mechanism. Residues N679, N705, N713, N723, N760, and N801 are each glycosylated (N-linked (GlcNAc...) asparagine).

It belongs to the peptidase S8 family.

It localises to the secreted. The sequence is that of Subtilisin-like protease SBT2.1 from Arabidopsis thaliana (Mouse-ear cress).